The sequence spans 590 residues: UvrABC system protein C (590 aa).

In terms of domain architecture, GIY-YIG spans 14–91 (DQPGCYLMKD…IKKHDPKYNV (78 aa)). The 36-residue stretch at 196–231 (NEVKKELEEKMHEAAENLEFERAKELRDQIAHIEST) folds into the UVR domain.

The protein belongs to the UvrC family. As to quaternary structure, interacts with UvrB in an incision complex.

The protein resides in the cytoplasm. Functionally, the UvrABC repair system catalyzes the recognition and processing of DNA lesions. UvrC both incises the 5' and 3' sides of the lesion. The N-terminal half is responsible for the 3' incision and the C-terminal half is responsible for the 5' incision. The protein is UvrABC system protein C of Bacillus subtilis (strain 168).